A 408-amino-acid chain; its full sequence is uncharacterized protein (408 aa).

The protein belongs to the protein kinase superfamily. ADCK protein kinase family.

This is an uncharacterized protein from Synechocystis sp. (strain ATCC 27184 / PCC 6803 / Kazusa).